Here is a 289-residue protein sequence, read N- to C-terminus: Methionyl-tRNA formyltransferase (289 aa).

106-109 (SLLP) contacts (6S)-5,6,7,8-tetrahydrofolate.

This sequence belongs to the Fmt family.

The enzyme catalyses L-methionyl-tRNA(fMet) + (6R)-10-formyltetrahydrofolate = N-formyl-L-methionyl-tRNA(fMet) + (6S)-5,6,7,8-tetrahydrofolate + H(+). Attaches a formyl group to the free amino group of methionyl-tRNA(fMet). The formyl group appears to play a dual role in the initiator identity of N-formylmethionyl-tRNA by promoting its recognition by IF2 and preventing the misappropriation of this tRNA by the elongation apparatus. This Mycoplasmopsis pulmonis (strain UAB CTIP) (Mycoplasma pulmonis) protein is Methionyl-tRNA formyltransferase.